Consider the following 114-residue polypeptide: MIDDIAVPLTFTDAAANKVKSLISEEENTDLKLRVYITGGGCSGFQYGFTFDEKVNDGDLTIEKSGVQLVIDPMSLQYLIGGTVDYTEGLEGSRFTVNNPNATSTCGCGSSFSI.

Iron-sulfur cluster contacts are provided by cysteine 42, cysteine 106, and cysteine 108.

It belongs to the HesB/IscA family. As to quaternary structure, homodimer. It depends on iron-sulfur cluster as a cofactor.

In terms of biological role, required for insertion of 4Fe-4S clusters for at least IspG. The protein is Iron-sulfur cluster insertion protein ErpA of Haemophilus influenzae (strain PittEE).